The following is a 194-amino-acid chain: RNA polymerase II subunit A C-terminal domain phosphatase SSU72 like protein 6 (194 aa).

This sequence belongs to the SSU72 phosphatase family.

It is found in the nucleus. It carries out the reaction O-phospho-L-seryl-[protein] + H2O = L-seryl-[protein] + phosphate. It catalyses the reaction O-phospho-L-threonyl-[protein] + H2O = L-threonyl-[protein] + phosphate. Protein phosphatase that catalyzes the dephosphorylation of the C-terminal domain of RNA polymerase II. Plays a role in RNA processing and termination. This chain is RNA polymerase II subunit A C-terminal domain phosphatase SSU72 like protein 6, found in Homo sapiens (Human).